A 505-amino-acid chain; its full sequence is uncharacterized protein (505 aa).

The tract at residues Arg461 to Ser480 is disordered.

To M.jannaschii MJ0787.

This is an uncharacterized protein from Methanothermobacter thermautotrophicus (strain ATCC 29096 / DSM 1053 / JCM 10044 / NBRC 100330 / Delta H) (Methanobacterium thermoautotrophicum).